The primary structure comprises 142 residues: Hemoglobin subunit alpha (142 aa).

Residues 1 to 142 (GLTAADKTLI…VEKALFETYR (142 aa)) form the Globin domain. Position 59 (His59) interacts with O2. His88 contacts heme b.

It belongs to the globin family. In terms of assembly, heterotetramer of two alpha chains and two beta chains (an easy dimerization is also reported). In terms of tissue distribution, red blood cells.

Involved in oxygen transport from the lung to the various peripheral tissues. This is Hemoglobin subunit alpha (HBA) from Latimeria chalumnae (Coelacanth).